A 247-amino-acid polypeptide reads, in one-letter code: ATP synthase subunit a, chloroplastic (247 aa).

A run of 5 helical transmembrane segments spans residues 38 to 58 (QVLI…AIAV), 95 to 115 (VPFI…GALL), 134 to 154 (INTT…AGLT), 199 to 219 (LVVV…VMFL), and 220 to 240 (GLFT…AYIG).

Belongs to the ATPase A chain family. As to quaternary structure, F-type ATPases have 2 components, CF(1) - the catalytic core - and CF(0) - the membrane proton channel. CF(1) has five subunits: alpha(3), beta(3), gamma(1), delta(1), epsilon(1). CF(0) has four main subunits: a, b, b' and c.

It localises to the plastid. The protein localises to the chloroplast thylakoid membrane. Key component of the proton channel; it plays a direct role in the translocation of protons across the membrane. In Illicium oligandrum (Star anise), this protein is ATP synthase subunit a, chloroplastic.